The sequence spans 511 residues: Glucose-1-phosphate adenylyltransferase large subunit 1, chloroplastic/amyloplastic (511 aa).

The N-terminal 58 residues, 1 to 58, are a transit peptide targeting the chloroplast; sequence MAAMDLRVAAPASVAAAARCGTSLARPWPARAVGGGGGGGGRGRRLSVRTSVATTEAA.

This sequence belongs to the bacterial/plant glucose-1-phosphate adenylyltransferase family. In terms of assembly, heterotetramer composed of two small and two large subunits. As to expression, expressed in leaves and stems.

It is found in the plastid. Its subcellular location is the chloroplast. It localises to the amyloplast. The enzyme catalyses alpha-D-glucose 1-phosphate + ATP + H(+) = ADP-alpha-D-glucose + diphosphate. Its pathway is glycan biosynthesis; starch biosynthesis. Its activity is regulated as follows. Activated by 3'phosphoglycerate, inhibited by orthophosphate. Allosteric regulation. Its function is as follows. Involved in synthesis of starch. Catalyzes the synthesis of ADP-glucose, a molecule that serves as an activated glycosyl donor for alpha-1,4-glucan synthesis. Essential for starch synthesis in leaf chloroplasts and endosperm amyloplasts. The polypeptide is Glucose-1-phosphate adenylyltransferase large subunit 1, chloroplastic/amyloplastic (Oryza sativa subsp. japonica (Rice)).